The sequence spans 284 residues: D-tagatose-1,6-bisphosphate aldolase subunit GatY (284 aa).

Catalysis depends on D82, which acts as the Proton donor. Residues H83 and H180 each contribute to the Zn(2+) site. Residue G181 participates in dihydroxyacetone phosphate binding. H208 provides a ligand contact to Zn(2+). Residues 209–211 and 230–233 each bind dihydroxyacetone phosphate; these read GAS and NVAT.

It belongs to the class II fructose-bisphosphate aldolase family. TagBP aldolase GatY subfamily. As to quaternary structure, forms a complex with GatZ. The cofactor is Zn(2+).

It carries out the reaction D-tagatofuranose 1,6-bisphosphate = D-glyceraldehyde 3-phosphate + dihydroxyacetone phosphate. It functions in the pathway carbohydrate metabolism; D-tagatose 6-phosphate degradation; D-glyceraldehyde 3-phosphate and glycerone phosphate from D-tagatose 6-phosphate: step 2/2. Its function is as follows. Catalytic subunit of the tagatose-1,6-bisphosphate aldolase GatYZ, which catalyzes the reversible aldol condensation of dihydroxyacetone phosphate (DHAP or glycerone-phosphate) with glyceraldehyde 3-phosphate (G3P) to produce tagatose 1,6-bisphosphate (TBP). Requires GatZ subunit for full activity and stability. Is involved in the catabolism of galactitol. This chain is D-tagatose-1,6-bisphosphate aldolase subunit GatY, found in Shigella flexneri serotype 5b (strain 8401).